The sequence spans 457 residues: Exodeoxyribonuclease 7 large subunit (457 aa).

The protein belongs to the XseA family. As to quaternary structure, heterooligomer composed of large and small subunits.

It is found in the cytoplasm. It catalyses the reaction Exonucleolytic cleavage in either 5'- to 3'- or 3'- to 5'-direction to yield nucleoside 5'-phosphates.. Its function is as follows. Bidirectionally degrades single-stranded DNA into large acid-insoluble oligonucleotides, which are then degraded further into small acid-soluble oligonucleotides. This is Exodeoxyribonuclease 7 large subunit from Enterobacter sp. (strain 638).